The following is a 512-amino-acid chain: Serine--tRNA ligase, cytoplasmic (512 aa).

The residue at position 1 (Met1) is an N-acetylmethionine. The tract at residues 9-61 is interaction with tRNA; it reads RVDKGGDPALIRETQEKRFKDPGLVDQLVKADSEWRRCRFRADNLNKLKNLCS. Ser241 is modified (phosphoserine). The L-serine site is built by Thr271 and Arg302. Residues 302–304 and 318–321 contribute to the ATP site; these read RQE and VHQF. An N6-acetyllysine modification is found at Lys323. L-serine is bound at residue Glu325. Position 391 to 394 (391 to 394) interacts with ATP; the sequence is ELVS. An L-serine-binding site is contributed by Asn427. Positions 470–512 are disordered; that stretch reads FVKPAPIDQEPSKKQKKQHEGSKKKAKEVPLENQLQSMEVTEA. Over residues 479–499 the composition is skewed to basic and acidic residues; the sequence is EPSKKQKKQHEGSKKKAKEVP. The short motif at 482 to 494 is the Nuclear localization signal element; it reads KKQKKQHEGSKKK. Polar residues predominate over residues 502–512; the sequence is NQLQSMEVTEA. Ser506 carries the phosphoserine modification.

This sequence belongs to the class-II aminoacyl-tRNA synthetase family. Type-1 seryl-tRNA synthetase subfamily. Homodimer. The tRNA molecule may bind across the dimer. Interacts with SIRT2. Interacts with METTL6; interaction is required for the tRNA N(3)-methylcytidine methyltransferase activity of METTL6.

It is found in the cytoplasm. The protein localises to the nucleus. It carries out the reaction tRNA(Ser) + L-serine + ATP = L-seryl-tRNA(Ser) + AMP + diphosphate + H(+). It catalyses the reaction tRNA(Sec) + L-serine + ATP = L-seryl-tRNA(Sec) + AMP + diphosphate + H(+). It participates in aminoacyl-tRNA biosynthesis; selenocysteinyl-tRNA(Sec) biosynthesis; L-seryl-tRNA(Sec) from L-serine and tRNA(Sec): step 1/1. Its function is as follows. Catalyzes the attachment of serine to tRNA(Ser) in a two-step reaction: serine is first activated by ATP to form Ser-AMP and then transferred to the acceptor end of tRNA(Ser). Is probably also able to aminoacylate tRNA(Sec) with serine, to form the misacylated tRNA L-seryl-tRNA(Sec), which will be further converted into selenocysteinyl-tRNA(Sec). In the nucleus, binds to the VEGFA core promoter and prevents MYC binding and transcriptional activation by MYC. Recruits SIRT2 to the VEGFA promoter, promoting deacetylation of histone H4 at 'Lys-16' (H4K16). Thereby, inhibits the production of VEGFA and sprouting angiogenesis mediated by VEGFA. The polypeptide is Serine--tRNA ligase, cytoplasmic (Sars1) (Mus musculus (Mouse)).